We begin with the raw amino-acid sequence, 328 residues long: MGVKFKDITNPEPIEMKELEGKILTVDASNVIYKFLSSMRQTDGTPLRDLNGHITSHLNGIMFQTSTLIEKDIKPVYVFDGKAPDLKKETQEERINIKKESEKKYLEAKEVGDVVAARKYAARTTHLNKEIIKSSKKLLDLMGIPYVQARTEGEAQASYMVSQNDAWAVVSQDYDCLQFGATRMIRNLKLSKSNSKNLELISLEKTLKELNLTREQLVDVAMLVGTDFNKGVYGIGAKKGIKLIHKYGTLEKALESLNETMEVDAELIREIFLNPNVVHNYTIEFKRPKKSQLLDFLCGEHDFDERRTISAIKKLQAKTAQSSLEDWF.

Residues 1–98 are N-domain; the sequence is MGVKFKDITN…ETQEERINIK (98 aa). Residues Asp27, Asp80, Glu152, Glu154, Asp173, Asp175, and Asp227 each contribute to the Mg(2+) site. Residues 116 to 248 form an I-domain region; sequence AARKYAARTT…KGIKLIHKYG (133 aa). The tract at residues 320 to 328 is interaction with PCNA; the sequence is AQSSLEDWF.

It belongs to the XPG/RAD2 endonuclease family. FEN1 subfamily. As to quaternary structure, interacts with PCNA. PCNA stimulates the nuclease activity without altering cleavage specificity. Mg(2+) serves as cofactor.

Structure-specific nuclease with 5'-flap endonuclease and 5'-3' exonuclease activities involved in DNA replication and repair. During DNA replication, cleaves the 5'-overhanging flap structure that is generated by displacement synthesis when DNA polymerase encounters the 5'-end of a downstream Okazaki fragment. Binds the unpaired 3'-DNA end and kinks the DNA to facilitate 5' cleavage specificity. Cleaves one nucleotide into the double-stranded DNA from the junction in flap DNA, leaving a nick for ligation. Also involved in the base excision repair (BER) pathway. Acts as a genome stabilization factor that prevents flaps from equilibrating into structures that lead to duplications and deletions. Also possesses 5'-3' exonuclease activity on nicked or gapped double-stranded DNA. This is Flap endonuclease 1 from Methanosphaera stadtmanae (strain ATCC 43021 / DSM 3091 / JCM 11832 / MCB-3).